The chain runs to 185 residues: MLNKIYDTQKEGCEKAIASLKRDFTTLRTGKVNINILDNVMVDYYGSPTPLNQVATVLTSDASTIAITPWEKSMIKAISSAIQAANIGVNPNSDGESVKLFFPPMTVEQRQENAKHAKAMGEKAKVSIRNVRKDANDEVKKLEKDKAITEDESKKGQDEVQKITDTYTAKIDTLVKEKEAELLKI.

This sequence belongs to the RRF family.

The protein localises to the cytoplasm. In terms of biological role, responsible for the release of ribosomes from messenger RNA at the termination of protein biosynthesis. May increase the efficiency of translation by recycling ribosomes from one round of translation to another. The sequence is that of Ribosome-recycling factor from Campylobacter concisus (strain 13826).